Reading from the N-terminus, the 163-residue chain is uncharacterized protein (163 aa).

The chain crosses the membrane as a helical span at residues 7–23 (TLVAFIATFFNLAATSI).

It is found in the membrane. This is an uncharacterized protein from Saccharomyces cerevisiae (strain ATCC 204508 / S288c) (Baker's yeast).